We begin with the raw amino-acid sequence, 253 residues long: 2-C-methyl-D-erythritol 4-phosphate cytidylyltransferase (253 aa).

This sequence belongs to the IspD/TarI cytidylyltransferase family. IspD subfamily.

The catalysed reaction is 2-C-methyl-D-erythritol 4-phosphate + CTP + H(+) = 4-CDP-2-C-methyl-D-erythritol + diphosphate. It participates in isoprenoid biosynthesis; isopentenyl diphosphate biosynthesis via DXP pathway; isopentenyl diphosphate from 1-deoxy-D-xylulose 5-phosphate: step 2/6. In terms of biological role, catalyzes the formation of 4-diphosphocytidyl-2-C-methyl-D-erythritol from CTP and 2-C-methyl-D-erythritol 4-phosphate (MEP). This chain is 2-C-methyl-D-erythritol 4-phosphate cytidylyltransferase, found in Chlorobium chlorochromatii (strain CaD3).